The following is a 264-amino-acid chain: Type III pantothenate kinase (264 aa).

6-13 (DVGNTNIK) is an ATP binding site. 108 to 111 (GSDR) provides a ligand contact to substrate. Aspartate 110 acts as the Proton acceptor in catalysis. Threonine 134 serves as a coordination point for ATP.

Belongs to the type III pantothenate kinase family. In terms of assembly, homodimer. Requires NH4(+) as cofactor. K(+) is required as a cofactor.

It localises to the cytoplasm. The catalysed reaction is (R)-pantothenate + ATP = (R)-4'-phosphopantothenate + ADP + H(+). The protein operates within cofactor biosynthesis; coenzyme A biosynthesis; CoA from (R)-pantothenate: step 1/5. Functionally, catalyzes the phosphorylation of pantothenate (Pan), the first step in CoA biosynthesis. This is Type III pantothenate kinase from Ehrlichia canis (strain Jake).